A 320-amino-acid polypeptide reads, in one-letter code: MNSENLTRAAVAPAEFVLLGITNRWDLRVALFLTCLPVYLVSLLGNMGMALLIRMDARLHTPMYFFLANLSLLDACYSSAIGPKMLVDLLLPRATIPYTACALQMFVFAGLADTECCLLAAMAYDRYVAIRNPLLYTTAMSQRLCLALLGASGLGGAVSAFVHTTLTFRLSFCRSRKINSFFCDIPPLLAISCSDTSLNELLLFAICGFIQTATVLAITVSYGFIAGAVIHMRSVEGSRRAASTGGSHLTAVAMMYGTLIFMYLRPSSSYALDTDKMASVFYTLVIPSLNPLIYSLRNKEVKEALRQTWSRFHCPGQGSQ.

At 1 to 29 (MNSENLTRAAVAPAEFVLLGITNRWDLRV) the chain is on the extracellular side. Residue asparagine 5 is glycosylated (N-linked (GlcNAc...) asparagine). The helical transmembrane segment at 30–50 (ALFLTCLPVYLVSLLGNMGMA) threads the bilayer. At 51–58 (LLIRMDAR) the chain is on the cytoplasmic side. The chain crosses the membrane as a helical span at residues 59–79 (LHTPMYFFLANLSLLDACYSS). The Extracellular segment spans residues 80-103 (AIGPKMLVDLLLPRATIPYTACAL). Cysteine 101 and cysteine 193 are oxidised to a cystine. Residues 104-124 (QMFVFAGLADTECCLLAAMAY) form a helical membrane-spanning segment. Topologically, residues 125–143 (DRYVAIRNPLLYTTAMSQR) are cytoplasmic. Residues 144–164 (LCLALLGASGLGGAVSAFVHT) traverse the membrane as a helical segment. Residues 165–200 (TLTFRLSFCRSRKINSFFCDIPPLLAISCSDTSLNE) are Extracellular-facing. A helical transmembrane segment spans residues 201 to 221 (LLLFAICGFIQTATVLAITVS). Topologically, residues 222–241 (YGFIAGAVIHMRSVEGSRRA) are cytoplasmic. The chain crosses the membrane as a helical span at residues 242–262 (ASTGGSHLTAVAMMYGTLIFM). The Extracellular segment spans residues 263–275 (YLRPSSSYALDTD). Residues 276-296 (KMASVFYTLVIPSLNPLIYSL) traverse the membrane as a helical segment. At 297–320 (RNKEVKEALRQTWSRFHCPGQGSQ) the chain is on the cytoplasmic side.

It belongs to the G-protein coupled receptor 1 family.

The protein resides in the cell membrane. Functionally, odorant receptor. The chain is Olfactory receptor 5C1 (OR5C1) from Homo sapiens (Human).